The sequence spans 287 residues: MILNKEKIKNYAAYLYIKVAYDQAHSKMAHTVYFTNFYRSSKPLFLDEEDPINPCFQTISMGGGYVSGEIYRSDFEINDDARCIITTQSSAKAYKTVDGKTSEQHTNITLGKNSILEYISDNVIVYEDGKFAQFNNFKMDSSATLIYTECFGPGWSPHGSAYQYEKMYLNTKIYYDDKLVLFDNLKFQPRKNDESAFGIMDGYHYCGTMIVINQQVIEDDVIKIRDLVKEKYPDMDMIFGVSRMDIPGLGLRVLANTYYHVEKINAVAHDYFRRKLFNKKPLILRKP.

The protein belongs to the UreD family. In terms of assembly, ureD, UreF and UreG form a complex that acts as a GTP-hydrolysis-dependent molecular chaperone, activating the urease apoprotein by helping to assemble the nickel containing metallocenter of UreC. The UreE protein probably delivers the nickel.

The protein localises to the cytoplasm. Its function is as follows. Required for maturation of urease via the functional incorporation of the urease nickel metallocenter. The sequence is that of Urease accessory protein UreD from Ureaplasma parvum serovar 3 (strain ATCC 27815 / 27 / NCTC 11736).